The chain runs to 446 residues: Methionine aminopeptidase 2 (446 aa).

Positions 1-85 (MAGVTEGEDT…KNKKKKKKKI (85 aa)) are disordered. Residues 8-32 (EDTKVIESKINELNIDKPKLEDNNE) show a composition bias toward basic and acidic residues. Acidic residues predominate over residues 42–58 (SGDDDDDDKEEDDDNEI). Basic residues predominate over residues 73-85 (KKNKNKKKKKKKI). His-197 contacts substrate. A divalent metal cation contacts are provided by Asp-217, Asp-228, and His-299. His-307 contributes to the substrate binding site. Residues Glu-332 and Glu-427 each coordinate a divalent metal cation.

It belongs to the peptidase M24A family. Methionine aminopeptidase eukaryotic type 2 subfamily. Requires Co(2+) as cofactor. Zn(2+) serves as cofactor. It depends on Mn(2+) as a cofactor. Fe(2+) is required as a cofactor.

It localises to the cytoplasm. It carries out the reaction Release of N-terminal amino acids, preferentially methionine, from peptides and arylamides.. Functionally, cotranslationally removes the N-terminal methionine from nascent proteins. The N-terminal methionine is often cleaved when the second residue in the primary sequence is small and uncharged (Met-Ala-, Cys, Gly, Pro, Ser, Thr, or Val). The polypeptide is Methionine aminopeptidase 2 (Candida albicans (strain SC5314 / ATCC MYA-2876) (Yeast)).